We begin with the raw amino-acid sequence, 69 residues long: Disintegrin VLO5B (69 aa).

In terms of domain architecture, Disintegrin spans 1–66; sequence MNSANPCCDP…DCPRNPWKSE (66 aa). 4 disulfides stabilise this stretch: Cys7–Cys30, Cys21–Cys27, Cys26–Cys51, and Cys39–Cys58. The Cell attachment site; atypical (MLD) signature appears at 43 to 45; that stretch reads MLD.

This sequence belongs to the disintegrin family. Dimeric disintegrin subfamily. Heterodimer with VLO5A; disulfide-linked. As to expression, expressed by the venom gland.

Its subcellular location is the secreted. Poor inhibitor of platelet aggregation. The disintegrin inhibits the adhesion of the alpha-4/beta-1 (ITGA4/ITGB1) integrin to VCAM-1. Inhibition on alpha-2b/beta-3 (ITGA2B/ITGB3) is low. This chain is Disintegrin VLO5B, found in Macrovipera lebetina obtusa (Levant blunt-nosed viper).